A 121-amino-acid chain; its full sequence is MGCASAKHVATVQNEEEAQRGKSYQNGDVFGDEYRIKPVEEVKYMKNGAEEEQKIAARNQENLEKSASSNTRLKTNKEIPGLVHQPRANMHISESQQEFFRMLDEKIEKGRDYCSEEEDIT.

Disordered regions lie at residues 1–28 (MGCASAKHVATVQNEEEAQRGKSYQNGD) and 60–81 (QENLEKSASSNTRLKTNKEIPG). Phosphoserine is present on residues serine 95 and serine 115.

This is an uncharacterized protein from Mus musculus (Mouse).